The chain runs to 423 residues: Serine--tRNA ligase (423 aa).

230–232 (TAE) provides a ligand contact to L-serine. An ATP-binding site is contributed by 261 to 263 (RAE). E284 is an L-serine binding site. 348–351 (EISS) serves as a coordination point for ATP. Position 384 (S384) interacts with L-serine.

This sequence belongs to the class-II aminoacyl-tRNA synthetase family. Type-1 seryl-tRNA synthetase subfamily. As to quaternary structure, homodimer. The tRNA molecule binds across the dimer.

It is found in the cytoplasm. It catalyses the reaction tRNA(Ser) + L-serine + ATP = L-seryl-tRNA(Ser) + AMP + diphosphate + H(+). It carries out the reaction tRNA(Sec) + L-serine + ATP = L-seryl-tRNA(Sec) + AMP + diphosphate + H(+). It participates in aminoacyl-tRNA biosynthesis; selenocysteinyl-tRNA(Sec) biosynthesis; L-seryl-tRNA(Sec) from L-serine and tRNA(Sec): step 1/1. In terms of biological role, catalyzes the attachment of serine to tRNA(Ser). Is also able to aminoacylate tRNA(Sec) with serine, to form the misacylated tRNA L-seryl-tRNA(Sec), which will be further converted into selenocysteinyl-tRNA(Sec). This Acetivibrio thermocellus (strain ATCC 27405 / DSM 1237 / JCM 9322 / NBRC 103400 / NCIMB 10682 / NRRL B-4536 / VPI 7372) (Clostridium thermocellum) protein is Serine--tRNA ligase.